A 288-amino-acid polypeptide reads, in one-letter code: Putative sugar uptake protein gbs2116 (288 aa).

The next 10 helical transmembrane spans lie at 4-26, 33-50, 55-72, 85-107, 117-134, 154-171, 181-200, 207-229, 234-256, and 268-285; these read LLIA…KIGG, FGMT…WLFK, TASL…WSVG, VSVA…GALV, FILG…FYFS, FATI…AVLF, AVIL…FMKF, VVVK…LLAA, LAIA…ILFL, and VVMG…LGIV.

It belongs to the GRP transporter (TC 2.A.7.5) family.

The protein localises to the cell membrane. This chain is Putative sugar uptake protein gbs2116, found in Streptococcus agalactiae serotype III (strain NEM316).